Reading from the N-terminus, the 609-residue chain is NADH-ubiquinone oxidoreductase chain 5 (609 aa).

Transmembrane regions (helical) follow at residues Val3–Val23, Ala46–Ile66, Met90–Tyr110, Pro115–Val135, Leu140–Trp160, Ala174–Ile194, Leu216–Leu236, Thr244–Ile264, Met276–Leu296, Ile304–Asn323, Ala328–Ile350, Val368–Phe388, Trp410–Phe432, Leu460–Thr480, Met485–Leu505, and Gly585–Ile605.

This sequence belongs to the complex I subunit 5 family.

It localises to the mitochondrion inner membrane. It carries out the reaction a ubiquinone + NADH + 5 H(+)(in) = a ubiquinol + NAD(+) + 4 H(+)(out). Core subunit of the mitochondrial membrane respiratory chain NADH dehydrogenase (Complex I) that is believed to belong to the minimal assembly required for catalysis. Complex I functions in the transfer of electrons from NADH to the respiratory chain. The immediate electron acceptor for the enzyme is believed to be ubiquinone. This Phoca vitulina (Harbor seal) protein is NADH-ubiquinone oxidoreductase chain 5 (MT-ND5).